Reading from the N-terminus, the 228-residue chain is FtsZ-localized protein A (228 aa).

One can recognise a GST N-terminal domain in the interval 3–85 (VERTLHHFPL…HIEETETEPP (83 aa)). The GST C-terminal domain occupies 90-223 (DPAERAEARR…WPGLAPAAHY (134 aa)).

Belongs to the GST superfamily. In terms of assembly, homodimer. Interacts with FtsZ filaments. Probably interacts with the GTPase domain of FtsZ.

The protein resides in the cytoplasm. Its function is as follows. Essential cell division protein that must bind to FtsZ for division to occur. Critical coordinator of envelope constriction through its interaction with FtsZ. Promotes the formation of highly curved FtsZ filaments, reduces the GTPase activity of FtsZ and stabilizes FtsZ polymers. May regulate FtsZ function by modulating its superstructure. Does not bind to glutathione. The chain is FtsZ-localized protein A from Caulobacter vibrioides (strain NA1000 / CB15N) (Caulobacter crescentus).